The primary structure comprises 512 residues: Glycerol kinase 2 (512 aa).

Thr-18 provides a ligand contact to ADP. ATP-binding residues include Thr-18, Thr-19, and Ser-20. Thr-18 is a binding site for sn-glycerol 3-phosphate. Residue Arg-22 participates in ADP binding. Residues Arg-88, Glu-89, Tyr-140, and Asp-255 each contribute to the sn-glycerol 3-phosphate site. Glycerol contacts are provided by Arg-88, Glu-89, Tyr-140, Asp-255, and Gln-256. ADP-binding residues include Thr-277 and Gly-321. Residues Thr-277, Gly-321, Gln-325, and Gly-422 each contribute to the ATP site. Residues Gly-422 and Asn-426 each contribute to the ADP site.

It belongs to the FGGY kinase family.

The catalysed reaction is glycerol + ATP = sn-glycerol 3-phosphate + ADP + H(+). Its pathway is polyol metabolism; glycerol degradation via glycerol kinase pathway; sn-glycerol 3-phosphate from glycerol: step 1/1. Its activity is regulated as follows. Inhibited by fructose 1,6-bisphosphate (FBP). Functionally, key enzyme in the regulation of glycerol uptake and metabolism. Catalyzes the phosphorylation of glycerol to yield sn-glycerol 3-phosphate. In Streptomyces coelicolor (strain ATCC BAA-471 / A3(2) / M145), this protein is Glycerol kinase 2.